A 413-amino-acid chain; its full sequence is MTNSTDGRADGRLRVVVLGSTGSIGTQALQVIADNPDRFEVVGLAAGGAHLDTLLRQRAQTGVTNIAVADEHAAQRVGDIPYHGSDAATRLVEQTEADVVLNALVGALGLRPTLAALKTGARLALANKESLVAGGSLVLRAARPGQIVPVDSEHSALAQCLRGGTPDEVAKLVLTASGGPFRGWSAADLEHVTPEQAGAHPTWSMGPMNTLNSASLVNKGLEVIETHLLFGIPYDRIDVVVHPQSIIHSMVTFIDGSTIAQASPPDMKLPISLALGWPRRVSGAAAACDFHTASSWEFEPLDTDVFPAVELARQAGVAGGCMTAVYNAANEEAAAAFLAGRIGFPAIVGIIADVLHAADQWAVEPATVDDVLDAQRWARERAQRAVSGMASVAIASTAKPGAAGRHASTLERS.

NADPH-binding residues include T21, G22, S23, I24, G47, and N127. K128 serves as a coordination point for 1-deoxy-D-xylulose 5-phosphate. An NADPH-binding site is contributed by E129. D151 is a Mn(2+) binding site. The 1-deoxy-D-xylulose 5-phosphate site is built by S152, E153, S177, and H200. E153 contributes to the Mn(2+) binding site. Residue G206 participates in NADPH binding. Residues S213, N218, K219, and E222 each contribute to the 1-deoxy-D-xylulose 5-phosphate site. Residue E222 participates in Mn(2+) binding.

Belongs to the DXR family. The cofactor is Mg(2+). It depends on Mn(2+) as a cofactor.

It catalyses the reaction 2-C-methyl-D-erythritol 4-phosphate + NADP(+) = 1-deoxy-D-xylulose 5-phosphate + NADPH + H(+). The protein operates within isoprenoid biosynthesis; isopentenyl diphosphate biosynthesis via DXP pathway; isopentenyl diphosphate from 1-deoxy-D-xylulose 5-phosphate: step 1/6. Functionally, catalyzes the NADPH-dependent rearrangement and reduction of 1-deoxy-D-xylulose-5-phosphate (DXP) to 2-C-methyl-D-erythritol 4-phosphate (MEP). The protein is 1-deoxy-D-xylulose 5-phosphate reductoisomerase of Mycobacterium bovis (strain ATCC BAA-935 / AF2122/97).